The following is an 82-amino-acid chain: Mu-conotoxin MrVIA (82 aa).

A signal peptide spans 1–22 (MKLTCMMIVAVLFLTAWTLVMA). A propeptide spanning residues 23 to 49 (DDSNNGLANHFSKSRDEMEDPEASKLE) is cleaved from the precursor. 3 disulfides stabilise this stretch: Cys-53–Cys-71, Cys-60–Cys-76, and Cys-70–Cys-81.

Expressed by the venom duct.

Its subcellular location is the secreted. Functionally, muO-conotoxins are gating-modifier toxins that inhibit sodium current by trapping the domain II voltage sensor in the closed position to prevent opening of the sodium channel. This toxin inhibits rNav1.2/SCN2A (IC(50)=532 nM), rNav1.4/SCN4A (IC(50)=438 nM) and rNav1.7/SCN9A (IC(50)=345 nM). It blocks Nav channels by interacting mainly with the C-terminal part of the pore loop of domain-3. It does not bind on site 1. At small concentration, this toxin also acts as a calcium current agonist, whereas at higher doses it blocks fast-inactivating calcium current. The protein is Mu-conotoxin MrVIA of Conus marmoreus (Marble cone).